Reading from the N-terminus, the 631-residue chain is tRNA 5-methylaminomethyl-2-thiouridine biosynthesis bifunctional protein MnmC (631 aa).

The interval 1 to 243 (MITDLRPPAM…KREMLTGRLP (243 aa)) is tRNA (mnm(5)s(2)U34)-methyltransferase. The segment at 261-631 (IGAGIAGAAL…GRLYRNQLTV (371 aa)) is FAD-dependent cmnm(5)s(2)U34 oxidoreductase.

This sequence in the N-terminal section; belongs to the methyltransferase superfamily. tRNA (mnm(5)s(2)U34)-methyltransferase family. It in the C-terminal section; belongs to the DAO family. FAD is required as a cofactor.

The protein resides in the cytoplasm. It catalyses the reaction 5-aminomethyl-2-thiouridine(34) in tRNA + S-adenosyl-L-methionine = 5-methylaminomethyl-2-thiouridine(34) in tRNA + S-adenosyl-L-homocysteine + H(+). Functionally, catalyzes the last two steps in the biosynthesis of 5-methylaminomethyl-2-thiouridine (mnm(5)s(2)U) at the wobble position (U34) in tRNA. Catalyzes the FAD-dependent demodification of cmnm(5)s(2)U34 to nm(5)s(2)U34, followed by the transfer of a methyl group from S-adenosyl-L-methionine to nm(5)s(2)U34, to form mnm(5)s(2)U34. This Marinobacter nauticus (strain ATCC 700491 / DSM 11845 / VT8) (Marinobacter aquaeolei) protein is tRNA 5-methylaminomethyl-2-thiouridine biosynthesis bifunctional protein MnmC.